The following is a 255-amino-acid chain: MASRGLDLWLDEHVWKRKQEIGVKGENLLLPDLWLDFLQLSPIFQRKLAAVIACVRRLRTQATVYPEEDMCMAWARFCDPSDIKVVILGQDPYHGGQANGLAFSVAYGFPVPPSLRNIYAELHRSLPEFSPPDHGCLDAWASQGVLLLNTILTVQKGKPGSHADIGWAWFTDHVISLLSERLKACVFMLWGAKAGDKASLINSKKHLVLTSQHPSPLAQNSTRKSAQQKFLGNNHFVLANNFLREKGLGEIDWRL.

Aspartate 91 functions as the Proton acceptor in the catalytic mechanism.

The protein belongs to the uracil-DNA glycosylase (UDG) superfamily. UNG family.

Its subcellular location is the host nucleus. The catalysed reaction is Hydrolyzes single-stranded DNA or mismatched double-stranded DNA and polynucleotides, releasing free uracil.. Excises uracil residues from the DNA which can arise as a result of misincorporation of dUMP residues by DNA polymerase or deamination of cytosines. Therefore may reduce deleterious uracil incorporation into the viral genome, particularly in terminally differentiated cells which lack DNA repair enzymes. This chain is Uracil-DNA glycosylase (UNG), found in Epstein-Barr virus (strain B95-8) (HHV-4).